The primary structure comprises 411 residues: LL-diaminopimelate aminotransferase (411 aa).

Positions 15 and 42 each coordinate substrate. Pyridoxal 5'-phosphate contacts are provided by residues Tyr72, 108-109 (AK), Tyr132, Asn187, Tyr218, and 246-248 (SFS). Substrate-binding residues include Lys109, Tyr132, and Asn187. The residue at position 249 (Lys249) is an N6-(pyridoxal phosphate)lysine. Arg257 and Asn292 together coordinate pyridoxal 5'-phosphate. Substrate contacts are provided by Asn292 and Arg388.

This sequence belongs to the class-I pyridoxal-phosphate-dependent aminotransferase family. LL-diaminopimelate aminotransferase subfamily. In terms of assembly, homodimer. Requires pyridoxal 5'-phosphate as cofactor.

It carries out the reaction (2S,6S)-2,6-diaminopimelate + 2-oxoglutarate = (S)-2,3,4,5-tetrahydrodipicolinate + L-glutamate + H2O + H(+). It participates in amino-acid biosynthesis; L-lysine biosynthesis via DAP pathway; LL-2,6-diaminopimelate from (S)-tetrahydrodipicolinate (aminotransferase route): step 1/1. Its function is as follows. Involved in the synthesis of meso-diaminopimelate (m-DAP or DL-DAP), required for both lysine and peptidoglycan biosynthesis. Catalyzes the direct conversion of tetrahydrodipicolinate to LL-diaminopimelate. This Crocosphaera subtropica (strain ATCC 51142 / BH68) (Cyanothece sp. (strain ATCC 51142)) protein is LL-diaminopimelate aminotransferase.